The following is a 436-amino-acid chain: MALPTIAIVGRPNVGKSTLFNRIAGERISIVEDVEGVTRDRIYATANWLNRKFSIIDTGGIDDVDAPFMEQIKHQAEIAMDEADVIVFVVSGKEGITDADEYVARMLYKTHKPIILAVNKVDNPEMRNEIFDFYALGLGDPFPVSSVHGIGTGDVLDAIVENLPNEEVVENPDMIKFSLIGRPNVGKSSLINAILGEERVIASPVAGTTRDAIDTVFTDSEGQEFTMIDTAGMRKSGKVYENTEKYSVMRAMRAIDRSDVVLMVLNAEEGIREYDKRIAGFAHEAGKGIVIVVNKWDTLEKDNHTMKDWEEDIRDQFQYLSYAPIIFVSALTKQRLHKLPDMIKQISQSQNTRIPSAVLNDVIMDAIAINPTPTDKGKRLKIFYATQVATKPPTFVIFVNEEELMHFSYLRFLENQIRKAFVFEGTPIHLIARKRK.

2 EngA-type G domains span residues proline 4–glutamate 167 and isoleucine 175–asparagine 351. Residues glycine 10 to serine 17, aspartate 57 to isoleucine 61, asparagine 119 to aspartate 122, glycine 181 to serine 188, aspartate 229 to methionine 233, and asparagine 294 to aspartate 297 contribute to the GTP site. Residues threonine 352–lysine 436 form the KH-like domain.

The protein belongs to the TRAFAC class TrmE-Era-EngA-EngB-Septin-like GTPase superfamily. EngA (Der) GTPase family. As to quaternary structure, associates with the 50S ribosomal subunit.

GTPase that plays an essential role in the late steps of ribosome biogenesis. This chain is GTPase Der, found in Streptococcus sanguinis (strain SK36).